We begin with the raw amino-acid sequence, 346 residues long: Cytidine deaminase 5 (346 aa).

CMP/dCMP-type deaminase domains follow at residues 20 to 148 (TDHK…FGSE) and 183 to 304 (DLCS…ITGA). Residue 58–60 (NVE) participates in substrate binding. A Zn(2+)-binding site is contributed by histidine 71. Catalysis depends on glutamate 73, which acts as the Proton donor. Residues cysteine 104 and cysteine 107 each contribute to the Zn(2+) site.

Belongs to the cytidine and deoxycytidylate deaminase family. As to quaternary structure, homodimer. Zn(2+) is required as a cofactor.

The catalysed reaction is cytidine + H2O + H(+) = uridine + NH4(+). It carries out the reaction 2'-deoxycytidine + H2O + H(+) = 2'-deoxyuridine + NH4(+). In terms of biological role, this enzyme scavenges exogenous and endogenous cytidine and 2'-deoxycytidine for UMP synthesis. The polypeptide is Cytidine deaminase 5 (CDA5) (Arabidopsis thaliana (Mouse-ear cress)).